The following is a 358-amino-acid chain: Alpha-2-HS-glycoprotein (358 aa).

An N-terminal signal peptide occupies residues 1–18 (MKFFVLFLCLVQLWGCHS). Residues 27-133 (ERNPACDDPE…QFSVVFAKCE (107 aa)) form the Cystatin fetuin-A-type 1 domain. 6 disulfides stabilise this stretch: cysteine 32–cysteine 349, cysteine 89–cysteine 100, cysteine 114–cysteine 132, cysteine 146–cysteine 149, cysteine 208–cysteine 218, and cysteine 229–cysteine 246. Asparagine 99 carries an N-linked (GlcNAc...) asparagine glycan. Serine 134 bears the Phosphoserine mark. At threonine 135 the chain carries Phosphothreonine. A Phosphoserine modification is found at serine 138. The Cystatin fetuin-A-type 2 domain maps to 144–254 (KVCPQCPLLT…TCTVFPTQPV (111 aa)). N-linked (GlcNAc...) asparagine glycosylation is found at asparagine 156 and asparagine 176. Residues 257-288 (LPQPDAASSANPPPAADPAVSPPSSPSVPVDS) form a disordered region. Residues 267-282 (NPPPAADPAVSPPSSP) are compositionally biased toward pro residues. Residues serine 318 and serine 320 each carry the phosphoserine modification. The disordered stretch occupies residues 320–350 (SGEAFGPRQKPKVTHPGVASGVGPVPPPPCP).

The protein belongs to the fetuin family. Phosphorylated by FAM20C in the extracellular medium. Bone marrow.

Its subcellular location is the secreted. The chain is Alpha-2-HS-glycoprotein (AHSG) from Cavia porcellus (Guinea pig).